The primary structure comprises 316 residues: Ribose-phosphate pyrophosphokinase (316 aa).

ATP contacts are provided by residues 37–39 (DGE) and 96–97 (RQ). The Mg(2+) site is built by histidine 130 and aspartate 171. Residue lysine 194 is part of the active site. D-ribose 5-phosphate contacts are provided by arginine 196 and aspartate 221.

This sequence belongs to the ribose-phosphate pyrophosphokinase family. Class I subfamily. Homohexamer. Requires Mg(2+) as cofactor.

It localises to the cytoplasm. The catalysed reaction is D-ribose 5-phosphate + ATP = 5-phospho-alpha-D-ribose 1-diphosphate + AMP + H(+). It functions in the pathway metabolic intermediate biosynthesis; 5-phospho-alpha-D-ribose 1-diphosphate biosynthesis; 5-phospho-alpha-D-ribose 1-diphosphate from D-ribose 5-phosphate (route I): step 1/1. Functionally, involved in the biosynthesis of the central metabolite phospho-alpha-D-ribosyl-1-pyrophosphate (PRPP) via the transfer of pyrophosphoryl group from ATP to 1-hydroxyl of ribose-5-phosphate (Rib-5-P). The chain is Ribose-phosphate pyrophosphokinase from Rhodopirellula baltica (strain DSM 10527 / NCIMB 13988 / SH1).